Consider the following 121-residue polypeptide: Small ribosomal subunit protein uS13 (121 aa).

Residues 94–121 (GLPLRGQRTRTNARTRKGPRRAAQSLKK) are disordered.

It belongs to the universal ribosomal protein uS13 family. As to quaternary structure, part of the 30S ribosomal subunit. Forms a loose heterodimer with protein S19. Forms two bridges to the 50S subunit in the 70S ribosome.

Located at the top of the head of the 30S subunit, it contacts several helices of the 16S rRNA. In the 70S ribosome it contacts the 23S rRNA (bridge B1a) and protein L5 of the 50S subunit (bridge B1b), connecting the 2 subunits; these bridges are implicated in subunit movement. Contacts the tRNAs in the A and P-sites. In Paraburkholderia phymatum (strain DSM 17167 / CIP 108236 / LMG 21445 / STM815) (Burkholderia phymatum), this protein is Small ribosomal subunit protein uS13.